The sequence spans 116 residues: NADH-ubiquinone oxidoreductase chain 3 (116 aa).

Helical transmembrane passes span 3-23, 56-76, and 87-107; these read LIMT…TVSF, FFLV…LLPL, and GTFF…IYEW.

Belongs to the complex I subunit 3 family.

The protein resides in the mitochondrion membrane. The catalysed reaction is a ubiquinone + NADH + 5 H(+)(in) = a ubiquinol + NAD(+) + 4 H(+)(out). Functionally, core subunit of the mitochondrial membrane respiratory chain NADH dehydrogenase (Complex I) that is believed to belong to the minimal assembly required for catalysis. Complex I functions in the transfer of electrons from NADH to the respiratory chain. The immediate electron acceptor for the enzyme is believed to be ubiquinone. The polypeptide is NADH-ubiquinone oxidoreductase chain 3 (MT-ND3) (Cyprinus carpio (Common carp)).